A 130-amino-acid chain; its full sequence is Small ribosomal subunit protein uS9 (130 aa).

Belongs to the universal ribosomal protein uS9 family.

The sequence is that of Small ribosomal subunit protein uS9 from Streptococcus equi subsp. equi (strain 4047).